We begin with the raw amino-acid sequence, 363 residues long: Isopentenyl-diphosphate delta-isomerase (363 aa).

15 to 16 (RK) contacts substrate. FMN contacts are provided by residues Ser73, 74 to 76 (SMT), Ser104, and Asn133. 104 to 106 (SMR) serves as a coordination point for substrate. Residue Gln168 coordinates substrate. Glu169 contacts Mg(2+). FMN contacts are provided by residues Lys200, Thr230, and 313–314 (AG).

It belongs to the IPP isomerase type 2 family. As to quaternary structure, homooctamer. Dimer of tetramers. FMN is required as a cofactor. The cofactor is NADPH. It depends on Mg(2+) as a cofactor.

The protein resides in the cytoplasm. The enzyme catalyses isopentenyl diphosphate = dimethylallyl diphosphate. Involved in the biosynthesis of isoprenoids. Catalyzes the 1,3-allylic rearrangement of the homoallylic substrate isopentenyl (IPP) to its allylic isomer, dimethylallyl diphosphate (DMAPP). The sequence is that of Isopentenyl-diphosphate delta-isomerase from Chlorobium phaeobacteroides (strain DSM 266 / SMG 266 / 2430).